The following is a 47-amino-acid chain: PhoP/PhoQ regulator MgrB (47 aa).

A helical transmembrane segment spans residues 6 to 26 (WLVLIVVVLACLVLWAQVINI).

Belongs to the MgrB family. As to quaternary structure, may form homooligomers. Probably interacts with the periplasmic domain of PhoQ.

It is found in the cell inner membrane. Functionally, phoP-regulated transcription is redox-sensitive, being activated when the periplasm becomes more reducing. MgrB acts between DsbA/DsbB and PhoP/PhoQ in this pathway. Represses PhoP/PhoQ signaling, possibly by binding to the periplasmic domain of PhoQ, altering its activity and that of downstream effector PhoP. The sequence is that of PhoP/PhoQ regulator MgrB from Escherichia fergusonii (strain ATCC 35469 / DSM 13698 / CCUG 18766 / IAM 14443 / JCM 21226 / LMG 7866 / NBRC 102419 / NCTC 12128 / CDC 0568-73).